A 514-amino-acid chain; its full sequence is 1,25-dihydroxyvitamin D(3) 24-hydroxylase, mitochondrial (514 aa).

A mitochondrion-targeting transit peptide spans 1–35 (MSCPIDKRRPLIAFLRRLRDLGQPPRSVTSKAHVK). Residue C462 participates in heme binding.

This sequence belongs to the cytochrome P450 family. Requires heme as cofactor.

The protein resides in the mitochondrion. The catalysed reaction is calcitriol + 2 reduced [adrenodoxin] + O2 + 2 H(+) = calcitetrol + 2 oxidized [adrenodoxin] + H2O. The enzyme catalyses calcitetrol + 2 reduced [adrenodoxin] + O2 + 2 H(+) = (1S)-1,25-dihydroxy-24-oxocalciol + 2 oxidized [adrenodoxin] + 2 H2O. It carries out the reaction (1S)-1,25-dihydroxy-24-oxocalciol + 2 reduced [adrenodoxin] + O2 + 2 H(+) = (1S)-1,23,25-trihydroxy-24-oxocalciol + 2 oxidized [adrenodoxin] + H2O. It catalyses the reaction (1S)-1,23-dihydroxy-24,25,26,27-tetranorcalciol + 2 reduced [adrenodoxin] + O2 + 2 H(+) = (1S)-1-hydroxy-23-oxo-24,25,26,27-tetranorcalciol + 2 oxidized [adrenodoxin] + 2 H2O. The catalysed reaction is (1S)-1-hydroxy-23-oxo-24,25,26,27-tetranorcalciol + 2 reduced [adrenodoxin] + O2 + H(+) = calcitroate + 2 oxidized [adrenodoxin] + H2O. The enzyme catalyses calcidiol + 2 reduced [adrenodoxin] + O2 + 2 H(+) = secalciferol + 2 oxidized [adrenodoxin] + H2O. It carries out the reaction secalciferol + 2 reduced [adrenodoxin] + O2 + 2 H(+) = 25-hydroxy-24-oxocalciol + 2 oxidized [adrenodoxin] + 2 H2O. It catalyses the reaction 25-hydroxy-24-oxocalciol + 2 reduced [adrenodoxin] + O2 + 2 H(+) = 23S,25-dihydroxy-24-oxocholecalciferol + 2 oxidized [adrenodoxin] + H2O. The catalysed reaction is 20S,23-dihydroxycholecalciferol + 2 reduced [adrenodoxin] + O2 + 2 H(+) = 20S,23,25-trihydroxycholecalciferol + 2 oxidized [adrenodoxin] + H2O. The enzyme catalyses 20S,23-dihydroxycholecalciferol + 2 reduced [adrenodoxin] + O2 + 2 H(+) = 20S,23,24-trihydroxycholecalciferol + 2 oxidized [adrenodoxin] + H2O. It carries out the reaction 20S-hydroxycholecalciferol + 2 reduced [adrenodoxin] + O2 + 2 H(+) = 20S,25-dihydroxycholecalciferol + 2 oxidized [adrenodoxin] + H2O. It catalyses the reaction 20S-hydroxycholecalciferol + 2 reduced [adrenodoxin] + O2 + 2 H(+) = 20S,24S-dihydroxycholecalciferol + 2 oxidized [adrenodoxin] + H2O. The catalysed reaction is 20S-hydroxycholecalciferol + 2 reduced [adrenodoxin] + O2 + 2 H(+) = 20S,24R-dihydroxycholecalciferol + 2 oxidized [adrenodoxin] + H2O. A cytochrome P450 monooxygenase with a key role in vitamin D catabolism and calcium homeostasis. Via C24-oxidation pathway, catalyzes the inactivation of both the vitamin D precursor calcidiol (25-hydroxyvitamin D(3)) and the active hormone calcitriol (1-alpha,25-dihydroxyvitamin D(3)). With initial hydroxylation at C-24 (via C24-oxidation pathway), performs a sequential 6-step oxidation of calcitriol leading to the formation of the biliary metabolite calcitroic acid. Hydroxylates at C-24 or C-25 other vitamin D active metabolites, such as CYP11A1-derived secosteroids 20S-hydroxycholecalciferol and 20S,23-dihydroxycholecalciferol. Mechanistically, uses molecular oxygen inserting one oxygen atom into a substrate, and reducing the second into a water molecule, with two electrons provided by NADPH via FDXR/adrenodoxin reductase and FDX1/adrenodoxin. The polypeptide is 1,25-dihydroxyvitamin D(3) 24-hydroxylase, mitochondrial (Mus musculus (Mouse)).